A 121-amino-acid polypeptide reads, in one-letter code: Large ribosomal subunit protein bL12 (121 aa).

This sequence belongs to the bacterial ribosomal protein bL12 family. In terms of assembly, homodimer. Part of the ribosomal stalk of the 50S ribosomal subunit. Forms a multimeric L10(L12)X complex, where L10 forms an elongated spine to which 2 to 4 L12 dimers bind in a sequential fashion. Binds GTP-bound translation factors.

Forms part of the ribosomal stalk which helps the ribosome interact with GTP-bound translation factors. Is thus essential for accurate translation. This chain is Large ribosomal subunit protein bL12, found in Shewanella frigidimarina (strain NCIMB 400).